The chain runs to 352 residues: Proton-activated chloride channel (352 aa).

The tract at residues 1–55 is disordered; sequence MEAIRKELSRSYQELNEEAEPVAIDPEEAEDEEKEQEEAASAVAPDRDSDRSSPP. Topologically, residues 1–65 are cytoplasmic; sequence MEAIRKELSR…VRFSRTCLKN (65 aa). The segment covering 15 to 38 has biased composition (acidic residues); it reads LNEEAEPVAIDPEEAEDEEKEQEE. A helical membrane pass occupies residues 66–86; sequence FFSVLLILVYLLLMGVAVFLV. The Extracellular segment spans residues 87–299; that stretch reads YQTITDFRDK…KDPYIQEIQD (213 aa). A helical membrane pass occupies residues 300–320; it reads IITANPWSMIALLCSVFLVLF. At 321 to 352 the chain is on the cytoplasmic side; it reads KAADFAKLSVKWMIKVRRRHLKKRARELNHIS.

The protein belongs to the proton-activated chloride channel family.

It is found in the cell membrane. It carries out the reaction chloride(in) = chloride(out). Chloride channel gated by pH that facilitates the entry of chloride ions into cells upon exposure to extracellular acidic pH. The sequence is that of Proton-activated chloride channel from Xenopus tropicalis (Western clawed frog).